Here is a 400-residue protein sequence, read N- to C-terminus: Protein phyllopod (400 aa).

Positions 109–127 (QERTKLRPVAMVRPTVRVQ) are interaction with sina. The disordered stretch occupies residues 125–145 (RVQPQSQPQLQPQVPINPTPA). Residues 127-138 (QPQSQPQLQPQV) are compositionally biased toward low complexity. The segment at 241-320 (YQRFPQPSVD…TAISEVLPTA (80 aa)) is interaction with ttk. A coiled-coil region spans residues 319 to 362 (TARYQVTHEENKENQQAQEMELELEEEEEVDGRAELEVVQEAEA). Positions 346–382 (EEVDGRAELEVVQEAEAPLEPQSHHKQGNSHQNSHQA) are disordered.

As to quaternary structure, component of some E3 complex at least composed of sina, ebi and phyl, required for the degradation of ttk. In terms of tissue distribution, in embryos, it is ubiquitously present before cellularization. During stages 9-11, it is expressed in neuroblasts and the SOP cells. From stage 12 onward, it decreases, but remains in a subset of PNS cells at stages 12-14. Weakly expressed in wing imaginal disks, in the SOP cells of wing margin bristles, notal macrochaetes, and other sensory organs. In leg disks, it is expressed in the precursors of the femoral chordotonal organs, as well as in external sensory SOP cells. Strongly expressed in the eye-antenna disk, it is specifically expressed in R1, R6 and R7 cells, and not in R3, R3, R4, R5 and R8 cells.

The protein resides in the nucleus. In terms of biological role, essential adapter component of E3 ubiquitin ligase complexes; involved in R7 photoreceptor cell differentiation, embryonic nervous system, external sensory organ development and specification of particular muscles. E3 ubiquitin ligase complexes mediate ubiquitination and subsequent proteasomal degradation of target proteins. Required for specification of R7 photoreceptor cell fate in the eye by participating in the ubiquitination and subsequent proteasomal degradation of Tramtrack (ttk), a general inhibitor of photoreceptor differentiation. Acts downstream of Notch signaling to specify the fate of the SOP (sensory organ precursor) cells and their progeny, probably via the sina-mediated proteasomal degradation of ttk. Its restricted pattern of expression, upon Notch and Ras signaling pathways, suggests that it acts as a key determinant in E3 complexes to trigger protein proteolysis in appropriate cells. This Drosophila melanogaster (Fruit fly) protein is Protein phyllopod (phyl).